The chain runs to 402 residues: Phosphoglycerate kinase (402 aa).

Substrate-binding positions include 24-26 (DFN), Arg40, 63-66 (HFGR), Arg122, and Arg155. ATP contacts are provided by residues Lys206, Gly297, Glu328, and 357-360 (GGDS).

Belongs to the phosphoglycerate kinase family. In terms of assembly, monomer.

It localises to the cytoplasm. The enzyme catalyses (2R)-3-phosphoglycerate + ATP = (2R)-3-phospho-glyceroyl phosphate + ADP. Its pathway is carbohydrate degradation; glycolysis; pyruvate from D-glyceraldehyde 3-phosphate: step 2/5. The protein is Phosphoglycerate kinase of Prochlorococcus marinus (strain MIT 9211).